Reading from the N-terminus, the 307-residue chain is Plastid division protein PDV2 (307 aa).

Methionine 1 is subject to N-acetylmethionine. The Cytoplasmic portion of the chain corresponds to methionine 1–arginine 213. The tract at residues serine 28–glutamate 66 is disordered. The segment covering glutamate 46–aspartate 61 has biased composition (basic and acidic residues). A Phosphoserine modification is found at serine 50. Positions leucine 76–glutamate 103 form a coiled coil. The disordered stretch occupies residues histidine 174–glycine 206. A helical membrane pass occupies residues phenylalanine 214 to alanine 234. Topologically, residues serine 235–glycine 307 are chloroplast intermembrane. The ARC6 binding stretch occupies residues serine 235–glycine 307.

As to quaternary structure, interacts (via C-terminus) with ARC6 (via C-terminus) in the chloroplast intermembrane space; this interaction induces ARC6 homodimerization and leads to the formation of a heterotetramer containing two ARC6 and two PDV2 subunits. Interacts with ARC5/DRP5B. As to expression, mostly expressed in young leaves.

Its subcellular location is the plastid. It localises to the chloroplast outer membrane. In terms of biological role, component of the plastid division machinery consisting in a binary fission accomplished by the simultaneous constriction of the FtsZ ring on the stromal side of the inner envelope membrane, and the ARC5/DRP5B ring on the cytosolic side of the outer envelope membrane. Positive factor of chloroplast division required, with a dosage effect, to mediate the recruitment and dimerization of ARC5/DRP5B at the midplastid constriction site in the cytoplasm at plastid outer envelope membranes (OEMs). Prevents ARC5/DRP5B GTPase acrivity. Relays plastid division site position between stroma and outer surface via interactions with the cytoplasmic ARC5/DRP5B and the inner membrane ARC6 that recruits stromal FtsZ ring. Binding to phosphatidylinositol 4-phosphate (PI4P) modulates negatively chloroplast division. The protein is Plastid division protein PDV2 of Arabidopsis thaliana (Mouse-ear cress).